A 139-amino-acid polypeptide reads, in one-letter code: Proline-rich protein 13 (139 aa).

Residues methionine 1–aspartate 139 are disordered. Composition is skewed to pro residues over residues alanine 24 to glycine 62 and glycine 70 to proline 91. Residues lysine 103 to histidine 124 are compositionally biased toward basic residues. The span at serine 125–aspartate 139 shows a compositional bias: low complexity.

It is found in the nucleus. Its function is as follows. Negatively regulates TSP1 expression at the level of transcription. This down-regulation was shown to reduce taxane-induced apoptosis. In Rattus norvegicus (Rat), this protein is Proline-rich protein 13 (Prr13).